The sequence spans 291 residues: 4-hydroxybenzoate octaprenyltransferase (291 aa).

A run of 8 helical transmembrane segments spans residues 23–43, 47–67, 98–118, 139–159, 171–191, 216–236, 238–258, and 267–287; these read PIGT…AADG, PALV…GCAI, LAVA…LNAL, FFAI…PMAY, WLML…YAMV, IMLC…ALAL, AAYW…YTLL, and FFVF…AALA.

This sequence belongs to the UbiA prenyltransferase family. Requires Mg(2+) as cofactor.

It localises to the cell inner membrane. The enzyme catalyses all-trans-octaprenyl diphosphate + 4-hydroxybenzoate = 4-hydroxy-3-(all-trans-octaprenyl)benzoate + diphosphate. It functions in the pathway cofactor biosynthesis; ubiquinone biosynthesis. Functionally, catalyzes the prenylation of para-hydroxybenzoate (PHB) with an all-trans polyprenyl group. Mediates the second step in the final reaction sequence of ubiquinone-8 (UQ-8) biosynthesis, which is the condensation of the polyisoprenoid side chain with PHB, generating the first membrane-bound Q intermediate 3-octaprenyl-4-hydroxybenzoate. The protein is 4-hydroxybenzoate octaprenyltransferase of Ralstonia nicotianae (strain ATCC BAA-1114 / GMI1000) (Ralstonia solanacearum).